We begin with the raw amino-acid sequence, 240 residues long: Heme oxygenase 1 (240 aa).

Arg10, His17, Tyr125, Lys168, and Arg172 together coordinate heme b.

This sequence belongs to the heme oxygenase family.

The catalysed reaction is heme b + 3 reduced [NADPH--hemoprotein reductase] + 3 O2 = biliverdin IXalpha + CO + Fe(2+) + 3 oxidized [NADPH--hemoprotein reductase] + 3 H2O + H(+). Its function is as follows. Catalyzes the opening of the heme ring with the release of iron. Key enzyme in the synthesis of the chromophoric part of the photosynthetic antennae. The polypeptide is Heme oxygenase 1 (pbsA1) (Synechocystis sp. (strain ATCC 27184 / PCC 6803 / Kazusa)).